Consider the following 119-residue polypeptide: Large ribosomal subunit protein bL19 (119 aa).

This sequence belongs to the bacterial ribosomal protein bL19 family.

In terms of biological role, this protein is located at the 30S-50S ribosomal subunit interface and may play a role in the structure and function of the aminoacyl-tRNA binding site. This chain is Large ribosomal subunit protein bL19, found in Sulfurovum sp. (strain NBC37-1).